The following is a 695-amino-acid chain: DNA ligase (695 aa).

NAD(+) is bound by residues 44 to 48 (DAEYD), 93 to 94 (SL), and glutamate 124. Residue lysine 126 is the N6-AMP-lysine intermediate of the active site. NAD(+) contacts are provided by arginine 147, glutamate 187, lysine 304, and lysine 328. Zn(2+) is bound by residues cysteine 422, cysteine 425, cysteine 440, and cysteine 445. In terms of domain architecture, BRCT spans 606–695 (TVQGPLAGKT…GIEVEAAARS (90 aa)).

This sequence belongs to the NAD-dependent DNA ligase family. LigA subfamily. It depends on Mg(2+) as a cofactor. The cofactor is Mn(2+).

It catalyses the reaction NAD(+) + (deoxyribonucleotide)n-3'-hydroxyl + 5'-phospho-(deoxyribonucleotide)m = (deoxyribonucleotide)n+m + AMP + beta-nicotinamide D-nucleotide.. DNA ligase that catalyzes the formation of phosphodiester linkages between 5'-phosphoryl and 3'-hydroxyl groups in double-stranded DNA using NAD as a coenzyme and as the energy source for the reaction. It is essential for DNA replication and repair of damaged DNA. The protein is DNA ligase of Thermomicrobium roseum (strain ATCC 27502 / DSM 5159 / P-2).